The chain runs to 197 residues: Na(+)-translocating NADH-quinone reductase subunit E (197 aa).

The next 6 membrane-spanning stretches (helical) occupy residues 11-31 (SVFI…FLAV), 35-55 (VSTA…SVPV), 76-96 (FLKF…LEMF), 108-128 (LGIY…VSFM), 139-159 (VVYG…LAGI), and 175-195 (LGIT…FSGI).

It belongs to the NqrDE/RnfAE family. As to quaternary structure, composed of six subunits; NqrA, NqrB, NqrC, NqrD, NqrE and NqrF.

The protein resides in the cell inner membrane. It catalyses the reaction a ubiquinone + n Na(+)(in) + NADH + H(+) = a ubiquinol + n Na(+)(out) + NAD(+). In terms of biological role, NQR complex catalyzes the reduction of ubiquinone-1 to ubiquinol by two successive reactions, coupled with the transport of Na(+) ions from the cytoplasm to the periplasm. NqrA to NqrE are probably involved in the second step, the conversion of ubisemiquinone to ubiquinol. This chain is Na(+)-translocating NADH-quinone reductase subunit E, found in Neisseria meningitidis serogroup C (strain 053442).